The following is a 380-amino-acid chain: MLYFLLQPLARDVRLFNLLNYITFRAAAAFVTALLVSFILGPAIIRRLRAMAVHQVVREGTPDTHAGKGTTPTMGGLIILAATFAPVLLWSRLSNRYVLLAMAVTAWMGVIGFLDDYLKLKQKREGKKNEGLVERYKLAGQVLCGLGLGAYLLLSPISTLPGASTTLPFFKYVLVVPAVAWAAWLYIPWVTFILTGVSNAVNLTDGLDGLSSGLVAIAVLTLGLFAYVLGRVDTSAYLQVFYLRGAGELTVFCAAVVGACIGFLWYNAHPAQVFMGDTGSLALGGAVGAIAILLKSEFLLLFVGAVFFAETVSVILQRTVFKYRLRRYGREYAQKHRVFRRAPLHHHFEMMGWPETQVVVRFWIIGILCAILALSTLKLR.

A run of 9 helical transmembrane segments spans residues 25-45 (RAAAAFVTALLVSFILGPAII), 70-90 (TTPTMGGLIILAATFAPVLLW), 98-118 (VLLAMAVTAWMGVIGFLDDYL), 142-162 (VLCGLGLGAYLLLSPISTLPG), 173-193 (VLVVPAVAWAAWLYIPWVTFI), 209-229 (GLSSGLVAIAVLTLGLFAYVL), 245-265 (GAGELTVFCAAVVGACIGFLW), 272-294 (QVFMGDTGSLALGGAVGAIAILL), and 357-377 (QVVVRFWIIGILCAILALSTL).

The protein belongs to the glycosyltransferase 4 family. MraY subfamily. Mg(2+) is required as a cofactor.

Its subcellular location is the cell inner membrane. It carries out the reaction UDP-N-acetyl-alpha-D-muramoyl-L-alanyl-gamma-D-glutamyl-meso-2,6-diaminopimeloyl-D-alanyl-D-alanine + di-trans,octa-cis-undecaprenyl phosphate = di-trans,octa-cis-undecaprenyl diphospho-N-acetyl-alpha-D-muramoyl-L-alanyl-D-glutamyl-meso-2,6-diaminopimeloyl-D-alanyl-D-alanine + UMP. It functions in the pathway cell wall biogenesis; peptidoglycan biosynthesis. Catalyzes the initial step of the lipid cycle reactions in the biosynthesis of the cell wall peptidoglycan: transfers peptidoglycan precursor phospho-MurNAc-pentapeptide from UDP-MurNAc-pentapeptide onto the lipid carrier undecaprenyl phosphate, yielding undecaprenyl-pyrophosphoryl-MurNAc-pentapeptide, known as lipid I. In Gemmatimonas aurantiaca (strain DSM 14586 / JCM 11422 / NBRC 100505 / T-27), this protein is Phospho-N-acetylmuramoyl-pentapeptide-transferase.